Reading from the N-terminus, the 156-residue chain is ATP synthase subunit b (156 aa).

Residues leucine 7–leucine 29 traverse the membrane as a helical segment.

It belongs to the ATPase B chain family. As to quaternary structure, F-type ATPases have 2 components, F(1) - the catalytic core - and F(0) - the membrane proton channel. F(1) has five subunits: alpha(3), beta(3), gamma(1), delta(1), epsilon(1). F(0) has three main subunits: a(1), b(2) and c(10-14). The alpha and beta chains form an alternating ring which encloses part of the gamma chain. F(1) is attached to F(0) by a central stalk formed by the gamma and epsilon chains, while a peripheral stalk is formed by the delta and b chains.

It localises to the cell inner membrane. Its function is as follows. F(1)F(0) ATP synthase produces ATP from ADP in the presence of a proton or sodium gradient. F-type ATPases consist of two structural domains, F(1) containing the extramembraneous catalytic core and F(0) containing the membrane proton channel, linked together by a central stalk and a peripheral stalk. During catalysis, ATP synthesis in the catalytic domain of F(1) is coupled via a rotary mechanism of the central stalk subunits to proton translocation. In terms of biological role, component of the F(0) channel, it forms part of the peripheral stalk, linking F(1) to F(0). The polypeptide is ATP synthase subunit b (Ectopseudomonas mendocina (strain ymp) (Pseudomonas mendocina)).